A 526-amino-acid polypeptide reads, in one-letter code: UDP-N-acetylmuramoyl-L-alanyl-D-glutamate--2,6-diaminopimelate ligase (526 aa).

Positions 48 and 50 each coordinate UDP-N-acetyl-alpha-D-muramoyl-L-alanyl-D-glutamate. Gly-136 to Thr-142 serves as a coordination point for ATP. Residues Thr-178–Thr-179, Ser-205, and Arg-213 each bind UDP-N-acetyl-alpha-D-muramoyl-L-alanyl-D-glutamate. An N6-carboxylysine modification is found at Lys-245. Residues Arg-408, Asp-432–Arg-435, Gly-490, and Glu-494 contribute to the meso-2,6-diaminopimelate site. Residues Asp-432 to Arg-435 carry the Meso-diaminopimelate recognition motif motif.

The protein belongs to the MurCDEF family. MurE subfamily. The cofactor is Mg(2+). Carboxylation is probably crucial for Mg(2+) binding and, consequently, for the gamma-phosphate positioning of ATP.

The protein localises to the cytoplasm. The catalysed reaction is UDP-N-acetyl-alpha-D-muramoyl-L-alanyl-D-glutamate + meso-2,6-diaminopimelate + ATP = UDP-N-acetyl-alpha-D-muramoyl-L-alanyl-gamma-D-glutamyl-meso-2,6-diaminopimelate + ADP + phosphate + H(+). The protein operates within cell wall biogenesis; peptidoglycan biosynthesis. Functionally, catalyzes the addition of meso-diaminopimelic acid to the nucleotide precursor UDP-N-acetylmuramoyl-L-alanyl-D-glutamate (UMAG) in the biosynthesis of bacterial cell-wall peptidoglycan. This Corynebacterium efficiens (strain DSM 44549 / YS-314 / AJ 12310 / JCM 11189 / NBRC 100395) protein is UDP-N-acetylmuramoyl-L-alanyl-D-glutamate--2,6-diaminopimelate ligase.